The chain runs to 206 residues: AT-hook motif nuclear-localized protein 28 (206 aa).

Disordered stretches follow at residues 1-21 (METV…PKAP) and 160-206 (TEEE…PSPY). Positions 5–17 (GRPRGRPRGSKNK) form a DNA-binding region, a.T hook. Positions 7–18 (PRGRPRGSKNKP) are enriched in basic residues. The PPC domain occupies 27 to 173 (DPPMSPYILE…QRNSAEGEEE (147 aa)).

It is found in the nucleus. Its function is as follows. Transcription factor that specifically binds AT-rich DNA sequences related to the nuclear matrix attachment regions (MARs). The protein is AT-hook motif nuclear-localized protein 28 of Arabidopsis thaliana (Mouse-ear cress).